Reading from the N-terminus, the 426-residue chain is Serine--tRNA ligase (426 aa).

An L-serine-binding site is contributed by 233-235 (TAE). ATP is bound at residue 264–266 (RSE). Glutamate 287 contributes to the L-serine binding site. ATP is bound at residue 351-354 (EISS). Serine 387 contributes to the L-serine binding site.

It belongs to the class-II aminoacyl-tRNA synthetase family. Type-1 seryl-tRNA synthetase subfamily. Homodimer. The tRNA molecule binds across the dimer.

It localises to the cytoplasm. The catalysed reaction is tRNA(Ser) + L-serine + ATP = L-seryl-tRNA(Ser) + AMP + diphosphate + H(+). It carries out the reaction tRNA(Sec) + L-serine + ATP = L-seryl-tRNA(Sec) + AMP + diphosphate + H(+). It participates in aminoacyl-tRNA biosynthesis; selenocysteinyl-tRNA(Sec) biosynthesis; L-seryl-tRNA(Sec) from L-serine and tRNA(Sec): step 1/1. Functionally, catalyzes the attachment of serine to tRNA(Ser). Is also able to aminoacylate tRNA(Sec) with serine, to form the misacylated tRNA L-seryl-tRNA(Sec), which will be further converted into selenocysteinyl-tRNA(Sec). The polypeptide is Serine--tRNA ligase (Clostridium botulinum (strain Hall / ATCC 3502 / NCTC 13319 / Type A)).